A 9439-amino-acid polypeptide reads, in one-letter code: Extracellular matrix-binding protein ebh (9439 aa).

29 consecutive FIVAR domains span residues 1815–1871 (ARRR…VNSA), 1901–1957 (AKEQ…INDA), 1985–2041 (AYDT…VRDA), 2071–2127 (AKKR…ITSE), 2155–2211 (AYNK…VTQA), 2241–2297 (AKNR…ISSE), 2325–2381 (AYNK…VEDA), 2411–2467 (AKEK…ITEN), 2488–2551 (DTTS…VNNA), 2581–2638 (ARNR…STEI), 2665–2720 (AKNQ…IRTN), 2748–2804 (AKTA…VSDE), 2832–2888 (AYNQ…VNNA), 2918–2974 (AKEQ…ISNA), 3002–3058 (AYNQ…VTAA), 3088–3144 (AKQQ…ITNE), 3172–3228 (AYNQ…VAQA), 3258–3314 (AKNQ…ISDE), 3335–3398 (DTTE…VNNA), 3428–3484 (ARLN…ITTE), 3512–3567 (AKTA…IKTN), 3595–3650 (IKRQ…VKES), 3678–3733 (AKNR…IRQN), 3802–3860 (SMTA…IDQK), 3928–3983 (AMTQ…LDPA), 4056–4114 (AMQA…VNQK), 4182–4240 (SMGT…VDNA), 4308–4365 (AMHT…INQK), and 4433–4491 (VMEQ…IEQA). Residues 2495 to 2507 (EVRKLSRRGDTNN) show a composition bias toward basic and acidic residues. Residues 2495–2514 (EVRKLSRRGDTNNKKPSSVS) form a disordered region. Positions 2925-2938 (AVDQVPSTEGMTQQ) are enriched in polar residues. Positions 2925–2951 (AVDQVPSTEGMTQQTKDDYNSKQQAAQ) are disordered. A disordered region spans residues 4522–4542 (LSGLTNEQKPKENQAVNGAQT). The FIVAR 30 domain occupies 4559-4617 (SMQTLRDLVNNQNAIHSTSNYFNEDSTQKNTYDNAIDNGSTYITGQHNPELNKSTIDQT). Residues 4648–4671 (LGYLNDPQKSGEESLVNGSNTRSE) form a disordered region. FIVAR domains are found at residues 4685–4743 (AMKQ…IEQK), 4811–4869 (AMQA…IEQA), 4937–4995 (AMSN…IEQA), 5063–5115 (AMEA…VLDK), 5189–5246 (AMLG…INQL), 5314–5372 (LMGA…VTTA), 5440–5498 (AMGE…IDQA), 5566–5624 (AMKK…ITNA), 5692–5750 (AMKQ…IADT), 5818–5875 (DMST…LQDL), 5943–6000 (AMKA…IKQA), 6068–6126 (KMEE…INRT), 6194–6252 (AMQQ…IQAI), and 6320–6378 (EMGT…IADA). Residues 5699-5712 (QVNQDDQISNSSPF) show a composition bias toward polar residues. A disordered region spans residues 5699–5719 (QVNQDDQISNSSPFINEDSDK). Residues 6413 to 6434 (NNSQRQSEHDEINSAPSRTEVS) form a disordered region. 18 consecutive FIVAR domains span residues 6446–6504 (AMRQ…IEDA), 6572–6630 (AMKA…INRA), 6698–6755 (SMNQ…IDQA), 6823–6877 (TMKA…ANDE), 6949–7007 (AMKK…INTI), 7075–7133 (SMNT…VERA), 7201–7259 (DMKK…IENA), 7327–7384 (AMKH…IKQL), 7452–7510 (AMEN…IEHA), 7578–7636 (AMKA…INSI), 7704–7762 (AMET…VDIV), 7830–7888 (AMKS…VRQA), 7956–8010 (VMGK…TKQA), 8078–8137 (IMGE…IDTF), 8205–8264 (AMKS…IQGL), 8332–8391 (AMKD…VLGL), 8459–8518 (KMKL…IQHL), and 8587–8643 (AMQG…ANII). Residues 9306-9324 (TVGVITLTGLLSSFWLVLA) traverse the membrane as a helical segment. Basic and acidic residues-rich tracts occupy residues 9363 to 9375 (DKEE…DKHS), 9386 to 9395 (EKQLSEEDIH), and 9404 to 9413 (QNSDNKDTKQ). The disordered stretch occupies residues 9363-9439 (DKEEQIQNDD…VVKTKKRSKK (77 aa)). Over residues 9414 to 9439 (KKVTSKKKKTPQSTKKVVKTKKRSKK) the composition is skewed to basic residues.

It localises to the cell membrane. The protein is Extracellular matrix-binding protein ebh (ebh) of Staphylococcus epidermidis (strain ATCC 35984 / DSM 28319 / BCRC 17069 / CCUG 31568 / BM 3577 / RP62A).